The primary structure comprises 162 residues: EF-hand calcium-binding domain-containing protein 11 (162 aa).

EF-hand domains follow at residues 18–53, 91–126, and 127–162; these read SERR…LFGY, LYRN…VAPK, and LPAR…GQSK. Ca(2+)-binding residues include Asp-140, Asp-142, Asp-144, His-146, and Asp-151.

The protein is EF-hand calcium-binding domain-containing protein 11 (Efcab11) of Mus musculus (Mouse).